The chain runs to 255 residues: Isoprenyl transferase (255 aa).

Residue Asp-35 is part of the active site. Asp-35 serves as a coordination point for Mg(2+). Substrate is bound by residues Gly-36–Arg-39, Trp-40, Arg-48, His-52, and Ser-80–Glu-82. The active-site Proton acceptor is the Asn-83. Substrate is bound by residues Trp-84, Arg-86, Arg-203, and Arg-209–Ser-211. Residue Glu-222 participates in Mg(2+) binding.

It belongs to the UPP synthase family. As to quaternary structure, homodimer. Mg(2+) is required as a cofactor.

In terms of biological role, catalyzes the condensation of isopentenyl diphosphate (IPP) with allylic pyrophosphates generating different type of terpenoids. The polypeptide is Isoprenyl transferase (Clostridium tetani (strain Massachusetts / E88)).